The sequence spans 84 residues: Sulfur carrier protein TusA (84 aa).

Cys21 (cysteine persulfide intermediate) is an active-site residue.

The protein belongs to the sulfur carrier protein TusA family.

It is found in the cytoplasm. Functionally, sulfur carrier protein which probably makes part of a sulfur-relay system. This Pseudomonas syringae pv. tomato (strain ATCC BAA-871 / DC3000) protein is Sulfur carrier protein TusA.